A 217-amino-acid polypeptide reads, in one-letter code: Pyridoxine/pyridoxamine 5'-phosphate oxidase (217 aa).

Residues 13–16 and lysine 71 each bind substrate; that span reads RREY. Residues 66–71, 81–82, arginine 87, lysine 88, and glutamine 110 contribute to the FMN site; these read RTVLLK and YT. Tyrosine 128, arginine 132, and serine 136 together coordinate substrate. FMN is bound by residues 145–146 and tryptophan 190; that span reads QS. 196–198 provides a ligand contact to substrate; the sequence is RLH. Arginine 200 provides a ligand contact to FMN.

The protein belongs to the pyridoxamine 5'-phosphate oxidase family. As to quaternary structure, homodimer. FMN is required as a cofactor.

The enzyme catalyses pyridoxamine 5'-phosphate + O2 + H2O = pyridoxal 5'-phosphate + H2O2 + NH4(+). The catalysed reaction is pyridoxine 5'-phosphate + O2 = pyridoxal 5'-phosphate + H2O2. It functions in the pathway cofactor metabolism; pyridoxal 5'-phosphate salvage; pyridoxal 5'-phosphate from pyridoxamine 5'-phosphate: step 1/1. It participates in cofactor metabolism; pyridoxal 5'-phosphate salvage; pyridoxal 5'-phosphate from pyridoxine 5'-phosphate: step 1/1. Its function is as follows. Catalyzes the oxidation of either pyridoxine 5'-phosphate (PNP) or pyridoxamine 5'-phosphate (PMP) into pyridoxal 5'-phosphate (PLP). This Rubrobacter xylanophilus (strain DSM 9941 / JCM 11954 / NBRC 16129 / PRD-1) protein is Pyridoxine/pyridoxamine 5'-phosphate oxidase.